A 32-amino-acid polypeptide reads, in one-letter code: Putative leucine-rich repeat protein PS14 (32 aa).

In Pinus strobus (Eastern white pine), this protein is Putative leucine-rich repeat protein PS14.